The following is a 135-amino-acid chain: Glutaredoxin-C5 (135 aa).

Residues 29 to 134 (AERVERLASE…PLLKEAGALW (106 aa)) form the Glutaredoxin domain. Cys-49 and Cys-52 form a disulfide bridge. Positions 132–135 (ALWL) match the Responsive for interaction with TGA factors motif.

Belongs to the glutaredoxin family. CC-type subfamily.

The protein localises to the cytoplasm. Its subcellular location is the nucleus. Its function is as follows. Has a glutathione-disulfide oxidoreductase activity in the presence of NADPH and glutathione reductase. Reduces low molecular weight disulfides and proteins. This is Glutaredoxin-C5 (GRXC5) from Oryza sativa subsp. japonica (Rice).